The primary structure comprises 208 residues: MKVKICGITHPDDAREAAKAGADYIGMIFAKDSRRCVSEEKAKYIVEAIQEGNSEPVGVFPEHSVEEILAITETTGITSIQLSGEDILFKFSHLREHFSIFYVVSVYSNGQPSAALPPMNDAVTVVYDHIGGERGSPFDWKAFSPFQHNNWMLGGGVNLWNIKEGISLLNPRGIDVSSGVECPGILRKDIFLMQALINSAKELSSSTL.

Belongs to the TrpF family.

The catalysed reaction is N-(5-phospho-beta-D-ribosyl)anthranilate = 1-(2-carboxyphenylamino)-1-deoxy-D-ribulose 5-phosphate. The protein operates within amino-acid biosynthesis; L-tryptophan biosynthesis; L-tryptophan from chorismate: step 3/5. In Chlamydia trachomatis serovar A (strain ATCC VR-571B / DSM 19440 / HAR-13), this protein is N-(5'-phosphoribosyl)anthranilate isomerase.